Consider the following 181-residue polypeptide: Glutamyl-tRNA(Gln) amidotransferase subunit C, chloroplastic/mitochondrial (181 aa).

The protein belongs to the GatC family. In terms of assembly, subunit of the heterotrimeric GatCAB amidotransferase (AdT) complex, composed of A, B and C subunits.

The protein resides in the mitochondrion. It is found in the plastid. It localises to the chloroplast. It catalyses the reaction L-glutamyl-tRNA(Gln) + L-glutamine + ATP + H2O = L-glutaminyl-tRNA(Gln) + L-glutamate + ADP + phosphate + H(+). Allows the formation of correctly charged Gln-tRNA(Gln) through the transamidation of misacylated Glu-tRNA(Gln) in chloroplasts and mitochondria. The reaction takes place in the presence of glutamine and ATP through an activated gamma-phospho-Glu-tRNA(Gln). This chain is Glutamyl-tRNA(Gln) amidotransferase subunit C, chloroplastic/mitochondrial, found in Picea sitchensis (Sitka spruce).